Consider the following 708-residue polypeptide: tRNA 5-methylaminomethyl-2-thiouridine biosynthesis bifunctional protein MnmC (708 aa).

Residues 1–278 (MTAEPNKPCQ…ERQVLRQQDA (278 aa)) form a tRNA (mnm(5)s(2)U34)-methyltransferase region. Positions 301–708 (IGGGLASAHL…LRKLLKGKAL (408 aa)) are FAD-dependent cmnm(5)s(2)U34 oxidoreductase.

This sequence in the N-terminal section; belongs to the methyltransferase superfamily. tRNA (mnm(5)s(2)U34)-methyltransferase family. It in the C-terminal section; belongs to the DAO family. It depends on FAD as a cofactor.

Its subcellular location is the cytoplasm. The catalysed reaction is 5-aminomethyl-2-thiouridine(34) in tRNA + S-adenosyl-L-methionine = 5-methylaminomethyl-2-thiouridine(34) in tRNA + S-adenosyl-L-homocysteine + H(+). Its function is as follows. Catalyzes the last two steps in the biosynthesis of 5-methylaminomethyl-2-thiouridine (mnm(5)s(2)U) at the wobble position (U34) in tRNA. Catalyzes the FAD-dependent demodification of cmnm(5)s(2)U34 to nm(5)s(2)U34, followed by the transfer of a methyl group from S-adenosyl-L-methionine to nm(5)s(2)U34, to form mnm(5)s(2)U34. This chain is tRNA 5-methylaminomethyl-2-thiouridine biosynthesis bifunctional protein MnmC, found in Shewanella baltica (strain OS195).